The following is a 510-amino-acid chain: Laccase (510 aa).

Plastocyanin-like domains lie at 45–79 (PTKLWTYNGSLPGPTIKANRNEKVKVKWMNKLPLK), 99–174 (KTVV…LISD), 242–317 (YLEV…IVLK), and 372–506 (LTLT…MRPM). Cu cation is bound by residues histidine 103, histidine 105, histidine 151, and histidine 153. Residues histidine 419, histidine 422, histidine 424, histidine 491, cysteine 492, histidine 493, histidine 497, and methionine 502 each coordinate Cu cation.

It belongs to the multicopper oxidase family. Cu(2+) is required as a cofactor.

The catalysed reaction is 4 hydroquinone + O2 = 4 benzosemiquinone + 2 H2O. With respect to regulation, resistant to alkali and organic solvents such as methanol, ethanol and acetone. Resistant to EDTA, which might be explained by the spatial protection of copper ions in the active sites. Inhibited by DMSO. Strongly inhibited by Fe(2+) and DTT. Its function is as follows. Multicopper oxidase that catalyzes the oxidation of a variety of substrates, including phenolic and non-phenolic compounds. Substrates include 2,6-dimethoxyphenol (2,6-DMP) and the non-phenolic compound 2,2'-azino-bis(3-ethylbenzothiazoline-6-sulfonic acid) (ABTS). Cannot use guaiacol and catechol. The polypeptide is Laccase (Bacillus stratosphericus).